A 331-amino-acid chain; its full sequence is MDSEAISSDSHVAAAIATRRRSNSVSDDYSVQRTNDDATQCKYFAIQKGYWKDDFIGRFANSSANVAEARRFPEISMGYWARTAAIEKYVRGFLEEFDGNAQVVSFGCGFDTLFWRLVSSDAKLAKYVEVDFSSVTSKKIRHILKPGGSVDLKKSFESEAVVSHHADLHAGNYHLIGADLRQTSELEQKLATCQLDHDIPTIFIAECVLVYMSSNTSSSLLKNLVSQFRHPAFVNYEQFRTSDAFTRVMEQNLGERGIQLHGLEMCESAEKQEERFRNAGFKSVKVMDMNQIFNQFLDQDEVARIRQIEMLDEMELLEQLLAHYCVVFARV.

S-adenosyl-L-methionine-binding positions include Arg82, Gly107, Asp131, 179 to 180 (DL), and Glu206.

The protein belongs to the methyltransferase superfamily. LCMT family.

The catalysed reaction is [phosphatase 2A protein]-C-terminal L-leucine + S-adenosyl-L-methionine = [phosphatase 2A protein]-C-terminal L-leucine methyl ester + S-adenosyl-L-homocysteine. Functionally, methylates the carboxyl group of the C-terminal leucine residue of protein phosphatase 2A catalytic subunits to form alpha-leucine ester residues. This Caenorhabditis briggsae protein is Probable leucine carboxyl methyltransferase 1.